The primary structure comprises 84 residues: RQC P-site tRNA stabilizing factor (84 aa).

Positions 1 to 64 constitute an S4 RNA-binding domain; it reads MRIDKFLQSV…IEEYTILQIP (64 aa).

Belongs to the RqcP family. Associates with stalled 50S ribosomal subunits. Binds to RqcH, 23S rRNA and the P-site tRNA. Does not require RqcH for association with 50S subunits.

In terms of biological role, key component of the ribosome quality control system (RQC), a ribosome-associated complex that mediates the extraction of incompletely synthesized nascent chains from stalled ribosomes and their subsequent degradation. RqcH recruits Ala-charged tRNA, and with RqcP directs the elongation of stalled nascent chains on 50S ribosomal subunits, leading to non-templated C-terminal alanine extensions (Ala tail). The Ala tail promotes nascent chain degradation. RqcP is associated with the translocation-like movement of the peptidyl-tRNA from the A-site into the P-site. The chain is RQC P-site tRNA stabilizing factor from Helicobacter pylori (strain J99 / ATCC 700824) (Campylobacter pylori J99).